The following is a 159-amino-acid chain: Aspartate carbamoyltransferase regulatory chain (159 aa).

Zn(2+) is bound by residues Cys-113, Cys-118, Cys-143, and Cys-146.

The protein belongs to the PyrI family. Contains catalytic and regulatory chains. Requires Zn(2+) as cofactor.

Involved in allosteric regulation of aspartate carbamoyltransferase. This chain is Aspartate carbamoyltransferase regulatory chain, found in Methanococcoides burtonii (strain DSM 6242 / NBRC 107633 / OCM 468 / ACE-M).